A 1173-amino-acid chain; its full sequence is Paired amphipathic helix protein Sin3-like 6 (1173 aa).

A disordered region spans residues 40 to 75 (NQSAGESGRRLKMKRAREDVHTDTQKRKPEVSSRGE). Over residues 55–75 (AREDVHTDTQKRKPEVSSRGE) the composition is skewed to basic and acidic residues. 2 PAH domains span residues 79-148 (LPRT…LPKG) and 162-232 (IRVD…LPNC). 3 disordered regions span residues 236–337 (APST…TTKY), 655–697 (TASG…TAQP), and 740–813 (KHEL…ENNK). Basic and acidic residues-rich tracts occupy residues 264-276 (CKLE…SDQR) and 301-319 (RDYE…RTEK). Residues 320 to 337 (SAASGSQDIGNHKSTTKY) are compositionally biased toward polar residues. Residues 750 to 765 (PTASREQSNFEVNGQN) are compositionally biased toward polar residues. Residues 778–810 (RSNKDKQSCDKKGAKNKTRAEDDKQENCHKLSE) show a composition bias toward basic and acidic residues.

It is found in the nucleus. In terms of biological role, acts as a transcriptional repressor. Plays roles in regulating gene expression and genome stability. The polypeptide is Paired amphipathic helix protein Sin3-like 6 (SNL6) (Arabidopsis thaliana (Mouse-ear cress)).